Reading from the N-terminus, the 226-residue chain is MKKINIAIDGPAGAGKSTISKLLASQLGYIHIDTGAMYRAVGLKVLKNNISPHDRKKIVEILNSTDIQIKLVDGRQLVFLDGEDVTEKIRQPEVSMYASDVSKIREVRERLVKMQQELAKQKGVIMDGRDIGTHVLPNAELKIFLTATAEERAKRRFLELKQKGYDVDYYQLLDEIKKRDQNDMTREFAPLRVAEDAIVIDSTSLSIEEVLQKVLELFYKVVKNEV.

Position 10–18 (Gly-10–Thr-18) interacts with ATP.

This sequence belongs to the cytidylate kinase family. Type 1 subfamily.

The protein resides in the cytoplasm. The enzyme catalyses CMP + ATP = CDP + ADP. It catalyses the reaction dCMP + ATP = dCDP + ADP. This is Cytidylate kinase from Caldicellulosiruptor bescii (strain ATCC BAA-1888 / DSM 6725 / KCTC 15123 / Z-1320) (Anaerocellum thermophilum).